Here is a 1057-residue protein sequence, read N- to C-terminus: Carbamoyl phosphate synthase large chain (1057 aa).

The segment at Met-1–Glu-401 is carboxyphosphate synthetic domain. ATP is bound by residues Arg-129, Arg-169, Gly-175, Gly-176, Lys-208, Ile-210, Glu-215, Gly-241, Ile-242, His-243, Gln-284, and Glu-298. Positions Arg-133–Val-327 constitute an ATP-grasp 1 domain. Gln-284, Glu-298, and Asn-300 together coordinate Mg(2+). 3 residues coordinate Mn(2+): Gln-284, Glu-298, and Asn-300. The tract at residues Tyr-402–Ser-546 is oligomerization domain. The segment at Ile-547–Gly-929 is carbamoyl phosphate synthetic domain. The ATP-grasp 2 domain maps to Glu-671 to Leu-861. ATP is bound by residues Arg-707, Arg-746, Leu-748, Glu-752, Gly-777, Val-778, His-779, Ser-780, Gln-820, and Glu-832. Mg(2+) is bound by residues Gln-820, Glu-832, and Asn-834. Gln-820, Glu-832, and Asn-834 together coordinate Mn(2+). The MGS-like domain maps to Leu-930–Met-1057. Residues Leu-930–Met-1057 are allosteric domain.

The protein belongs to the CarB family. In terms of assembly, composed of two chains; the small (or glutamine) chain promotes the hydrolysis of glutamine to ammonia, which is used by the large (or ammonia) chain to synthesize carbamoyl phosphate. Tetramer of heterodimers (alpha,beta)4. Mg(2+) is required as a cofactor. The cofactor is Mn(2+).

It catalyses the reaction hydrogencarbonate + L-glutamine + 2 ATP + H2O = carbamoyl phosphate + L-glutamate + 2 ADP + phosphate + 2 H(+). The catalysed reaction is hydrogencarbonate + NH4(+) + 2 ATP = carbamoyl phosphate + 2 ADP + phosphate + 2 H(+). It functions in the pathway amino-acid biosynthesis; L-arginine biosynthesis; carbamoyl phosphate from bicarbonate: step 1/1. It participates in pyrimidine metabolism; UMP biosynthesis via de novo pathway; (S)-dihydroorotate from bicarbonate: step 1/3. In terms of biological role, large subunit of the glutamine-dependent carbamoyl phosphate synthetase (CPSase). CPSase catalyzes the formation of carbamoyl phosphate from the ammonia moiety of glutamine, carbonate, and phosphate donated by ATP, constituting the first step of 2 biosynthetic pathways, one leading to arginine and/or urea and the other to pyrimidine nucleotides. The large subunit (synthetase) binds the substrates ammonia (free or transferred from glutamine from the small subunit), hydrogencarbonate and ATP and carries out an ATP-coupled ligase reaction, activating hydrogencarbonate by forming carboxy phosphate which reacts with ammonia to form carbamoyl phosphate. This is Carbamoyl phosphate synthase large chain from Macrococcus caseolyticus (strain JCSC5402) (Macrococcoides caseolyticum).